Reading from the N-terminus, the 434-residue chain is Glutamyl-tRNA reductase (434 aa).

Residues 52 to 55, serine 115, 120 to 122, and glutamine 126 each bind substrate; these read TCNR and ETQ. Catalysis depends on cysteine 53, which acts as the Nucleophile. 195-200 lines the NADP(+) pocket; that stretch reads GAGEMI.

The protein belongs to the glutamyl-tRNA reductase family. In terms of assembly, homodimer.

It carries out the reaction (S)-4-amino-5-oxopentanoate + tRNA(Glu) + NADP(+) = L-glutamyl-tRNA(Glu) + NADPH + H(+). It functions in the pathway porphyrin-containing compound metabolism; protoporphyrin-IX biosynthesis; 5-aminolevulinate from L-glutamyl-tRNA(Glu): step 1/2. Its function is as follows. Catalyzes the NADPH-dependent reduction of glutamyl-tRNA(Glu) to glutamate 1-semialdehyde (GSA). In Cupriavidus necator (strain ATCC 17699 / DSM 428 / KCTC 22496 / NCIMB 10442 / H16 / Stanier 337) (Ralstonia eutropha), this protein is Glutamyl-tRNA reductase.